A 421-amino-acid polypeptide reads, in one-letter code: D-amino-acid oxidase (421 aa).

FAD is bound by residues A12, G13, A14, V15, G47, G64, I65, K225, A226, R359, G385, G388, and L389. R359 contributes to the D-proline binding site. Residue R359 coordinates D-serine.

Belongs to the DAMOX/DASOX family. The cofactor is FAD.

It localises to the cytoplasm. The protein resides in the secreted. It is found in the cell wall. It catalyses the reaction a D-alpha-amino acid + O2 + H2O = a 2-oxocarboxylate + H2O2 + NH4(+). Catalyzes the oxidative deamination of D-amino acids with broad substrate specificity. The polypeptide is D-amino-acid oxidase (Bradyrhizobium diazoefficiens (strain JCM 10833 / BCRC 13528 / IAM 13628 / NBRC 14792 / USDA 110)).